Here is a 305-residue protein sequence, read N- to C-terminus: GTPase Era (305 aa).

The region spanning 13-181 (RCGFVAIVGR…ESAVGRFLPE (169 aa)) is the Era-type G domain. A G1 region spans residues 21 to 28 (GRPNVGKS). 21–28 (GRPNVGKS) lines the GTP pocket. The interval 47–51 (QTTRH) is G2. The interval 68 to 71 (DTPG) is G3. Residues 68–72 (DTPGM) and 130–133 (NKVD) each bind GTP. Residues 130-133 (NKVD) form a G4 region. The G5 stretch occupies residues 160 to 162 (LSA). Positions 204–288 (VREKITRQLG…MLRLWVKVKR (85 aa)) constitute a KH type-2 domain.

It belongs to the TRAFAC class TrmE-Era-EngA-EngB-Septin-like GTPase superfamily. Era GTPase family. As to quaternary structure, monomer.

It is found in the cytoplasm. It localises to the cell inner membrane. An essential GTPase that binds both GDP and GTP, with rapid nucleotide exchange. Plays a role in 16S rRNA processing and 30S ribosomal subunit biogenesis and possibly also in cell cycle regulation and energy metabolism. The protein is GTPase Era of Marinobacter nauticus (strain ATCC 700491 / DSM 11845 / VT8) (Marinobacter aquaeolei).